Consider the following 655-residue polypeptide: Putative calcium up-regulated protein J (655 aa).

Residues Lys40–Glu181 enclose the Ricin B-type lectin domain.

It belongs to the cup family.

The polypeptide is Putative calcium up-regulated protein J (cupJ) (Dictyostelium discoideum (Social amoeba)).